Consider the following 588-residue polypeptide: Transcriptional regulatory protein ASH1 (588 aa).

S56 is modified (phosphoserine). Disordered stretches follow at residues 85 to 109, 377 to 398, and 417 to 495; these read SNTA…GNSP, SNNS…QASN, and SSVS…TRHT. Positions 99–109 are enriched in polar residues; it reads PISSLTPGNSP. Residues 383 to 392 are compositionally biased toward basic residues; sequence NVRKPSKNKI. A compositionally biased stretch (low complexity) spans 417 to 433; the sequence is SSVSASSSPSPSTPTKS. Position 465 is a phosphoserine (S465). Residues 470–493 show a composition bias toward low complexity; sequence PRRSSNSSITKKGSRRSSGSSPTR. The GATA-type; atypical zinc finger occupies 499 to 526; that stretch reads CVSCHSSDSPCWRPSWSPRKQDQLCNSC.

In terms of assembly, component of the RPD3C(L) complex composed of at least ASH1, CTI6, DEP1, PHO23, RPD3, RXT2, RXT3, SAP30, SDS3, SIN3, UME1 and UME6.

The protein resides in the nucleus. Its function is as follows. Component of the RPD3C(L) histone deacetylase complex (HDAC). Responsible for the deacetylation of lysine residues on the N-terminal part of the core histones (H2A, H2B, H3 and H4). Histone deacetylation gives a tag for epigenetic repression and plays an important role in transcriptional regulation, cell cycle progression and developmental events. ASH1 is necessary to repress HO in daughter cells to block mating-type switching through its binding to HO promoter 5'-YTGAT-3' sites. Also involved in pseudohyphal growth. The protein is Transcriptional regulatory protein ASH1 (ASH1) of Saccharomyces cerevisiae (strain ATCC 204508 / S288c) (Baker's yeast).